The following is a 270-amino-acid chain: 4-hydroxy-tetrahydrodipicolinate reductase (270 aa).

Residues 9 to 14 (GAGGRM) and Glu-35 each bind NAD(+). Arg-36 is a binding site for NADP(+). Residues 99-101 (GTT) and 123-126 (ASNY) each bind NAD(+). His-156 functions as the Proton donor/acceptor in the catalytic mechanism. His-157 is a binding site for (S)-2,3,4,5-tetrahydrodipicolinate. The Proton donor role is filled by Lys-160. Residue 166-167 (GT) participates in (S)-2,3,4,5-tetrahydrodipicolinate binding.

Belongs to the DapB family.

It is found in the cytoplasm. The enzyme catalyses (S)-2,3,4,5-tetrahydrodipicolinate + NAD(+) + H2O = (2S,4S)-4-hydroxy-2,3,4,5-tetrahydrodipicolinate + NADH + H(+). It carries out the reaction (S)-2,3,4,5-tetrahydrodipicolinate + NADP(+) + H2O = (2S,4S)-4-hydroxy-2,3,4,5-tetrahydrodipicolinate + NADPH + H(+). It participates in amino-acid biosynthesis; L-lysine biosynthesis via DAP pathway; (S)-tetrahydrodipicolinate from L-aspartate: step 4/4. Its function is as follows. Catalyzes the conversion of 4-hydroxy-tetrahydrodipicolinate (HTPA) to tetrahydrodipicolinate. The polypeptide is 4-hydroxy-tetrahydrodipicolinate reductase (Actinobacillus succinogenes (strain ATCC 55618 / DSM 22257 / CCUG 43843 / 130Z)).